A 294-amino-acid chain; its full sequence is Protoheme IX farnesyltransferase (294 aa).

9 helical membrane-spanning segments follow: residues 22–42, 46–66, 89–109, 116–136, 143–163, 170–190, 211–231, 232–252, and 272–292; these read VTQLAVFCAVIGMFLATPDLP, IVIAATIGIWLLAGAAFAINC, ITVPQTLVFSGVIGGAGMWVL, LTMWLTFATFVGYAVIYTIIL, NIVIGGLSGAMPPALGWAAVA, AWILVLIIFIWTPPHFWALAL, AFTQFHIWLYTIALVATTMLP, FAVGMSGLIYLVVAAVLDVIF, and FTYSIIYLSLLFAALLVDHYL.

Belongs to the UbiA prenyltransferase family. Protoheme IX farnesyltransferase subfamily.

The protein localises to the cell inner membrane. It catalyses the reaction heme b + (2E,6E)-farnesyl diphosphate + H2O = Fe(II)-heme o + diphosphate. Its pathway is porphyrin-containing compound metabolism; heme O biosynthesis; heme O from protoheme: step 1/1. In terms of biological role, converts heme B (protoheme IX) to heme O by substitution of the vinyl group on carbon 2 of heme B porphyrin ring with a hydroxyethyl farnesyl side group. The chain is Protoheme IX farnesyltransferase from Herminiimonas arsenicoxydans.